The sequence spans 346 residues: Nuclear distribution protein nudE-like 1 (346 aa).

Residues 13 to 190 adopt a coiled-coil conformation; it reads KEEIVYWREL…LAVRERQTNG (178 aa). 2 disordered regions span residues 184 to 205 and 325 to 346; these read RERQTNGTRKSAPSSPTLDCDK and YDPPGVLGSRPPSPPGMLPLSV. A compositionally biased stretch (polar residues) spans 188 to 200; sequence TNGTRKSAPSSPT. Over residues 335 to 346 the composition is skewed to pro residues; it reads PPSPPGMLPLSV.

This sequence belongs to the nudE family. In terms of processing, phosphorylated in mitosis.

The protein resides in the cytoplasm. It localises to the cytoskeleton. It is found in the microtubule organizing center. The protein localises to the centrosome. Its subcellular location is the spindle. Its function is as follows. Required for organization of the cellular microtubule array and microtubule anchoring at the centrosome. Positively regulates the activity of the minus-end directed microtubule motor protein dynein. May enhance dynein-mediated microtubule sliding by targeting dynein to the microtubule plus end. Positively regulates lysosome peripheral distribution and ruffled border formation in osteoclasts. The sequence is that of Nuclear distribution protein nudE-like 1 (ndel1) from Xenopus tropicalis (Western clawed frog).